The following is a 348-amino-acid chain: Photosystem II protein D1 (348 aa).

The next 3 membrane-spanning stretches (helical) occupy residues 33-50 (YIGWFGILMFPLLVLATV), 122-137 (HFIFGAGAYMGREWEF), and 146-160 (WIFVAFSAPLVAASA). His-122 is a binding site for chlorophyll a. Tyr-130 is a binding site for pheophytin a. Asp-174 and Glu-193 together coordinate [CaMn4O5] cluster. Residues 201 to 222 (FHILGVAAVFGGSLFSAMHGSL) form a helical membrane-spanning segment. Position 202 (His-202) interacts with chlorophyll a. Residues His-219 and 268–269 (SF) each bind a quinone. His-219 provides a ligand contact to Fe cation. Position 276 (His-276) interacts with Fe cation. Residues 278–292 (FLAAWPVIGIWFTSL) form a helical membrane-spanning segment. 4 residues coordinate [CaMn4O5] cluster: His-336, Glu-337, Asp-346, and Ala-348.

The protein belongs to the reaction center PufL/M/PsbA/D family. As to quaternary structure, PSII is composed of 1 copy each of membrane proteins PsbA, PsbB, PsbC, PsbD, PsbE, PsbF, PsbH, PsbI, PsbJ, PsbK, PsbL, PsbM, PsbT, PsbX, PsbY, PsbZ, Psb30/Ycf12, at least 3 peripheral proteins of the oxygen-evolving complex and a large number of cofactors. It forms dimeric complexes. The D1/D2 heterodimer binds P680, chlorophylls that are the primary electron donor of PSII, and subsequent electron acceptors. It shares a non-heme iron and each subunit binds pheophytin, quinone, additional chlorophylls, carotenoids and lipids. D1 provides most of the ligands for the Mn4-Ca-O5 cluster of the oxygen-evolving complex (OEC). There is also a Cl(-1) ion associated with D1 and D2, which is required for oxygen evolution. The PSII complex binds additional chlorophylls, carotenoids and specific lipids. is required as a cofactor. Tyr-165 forms a radical intermediate that is referred to as redox-active TyrZ, YZ or Y-Z.

The protein localises to the plastid. It localises to the chloroplast thylakoid membrane. It carries out the reaction 2 a plastoquinone + 4 hnu + 2 H2O = 2 a plastoquinol + O2. Photosystem II (PSII) is a light-driven water:plastoquinone oxidoreductase that uses light energy to abstract electrons from H(2)O, generating O(2) and a proton gradient subsequently used for ATP formation. It consists of a core antenna complex that captures photons, and an electron transfer chain that converts photonic excitation into a charge separation. The D1/D2 (PsbA/PsbD) reaction center heterodimer binds P680, the primary electron donor of PSII as well as several subsequent electron acceptors. This is Photosystem II protein D1 from Heterocapsa triquetra (Dinoflagellate).